The sequence spans 148 residues: Truncated transcription factor CAULIFLOWER C (148 aa).

The region spanning 1–61 (MGRGRVEMKR…GKLFEYSSES (61 aa)) is the MADS-box domain. The K-box; partial domain occupies 90 to 148 (QTNWSMEYSRLKAKIELWERNQRHYLGEDLESISIKELQNLEQQLDTSLKHIPSRKVCK).

As to quaternary structure, homodimer capable of binding to CArG-box sequences.

Its subcellular location is the nucleus. Probable transcription factor that promotes early floral meristem identity in synergy with APETALA1, FRUITFULL and LEAFY. Is required subsequently for the transition of an inflorescence meristem into a floral meristem. Seems to be partially redundant to the function of APETALA1. The polypeptide is Truncated transcription factor CAULIFLOWER C (CAL-C) (Brassica oleracea var. botrytis (Cauliflower)).